The chain runs to 325 residues: Anthranilate phosphoribosyltransferase (325 aa).

5-phospho-alpha-D-ribose 1-diphosphate is bound by residues Gly-74, 77-78 (GD), Thr-82, 84-87 (NVST), 101-109 (KHGNVSITS), and Ser-113. Gly-74 serves as a coordination point for anthranilate. Residue Ser-86 participates in Mg(2+) binding. Position 104 (Asn-104) interacts with anthranilate. Arg-159 serves as a coordination point for anthranilate. Residues Asp-217 and Glu-218 each contribute to the Mg(2+) site.

This sequence belongs to the anthranilate phosphoribosyltransferase family. In terms of assembly, homodimer. It depends on Mg(2+) as a cofactor.

The enzyme catalyses N-(5-phospho-beta-D-ribosyl)anthranilate + diphosphate = 5-phospho-alpha-D-ribose 1-diphosphate + anthranilate. It functions in the pathway amino-acid biosynthesis; L-tryptophan biosynthesis; L-tryptophan from chorismate: step 2/5. Its function is as follows. Catalyzes the transfer of the phosphoribosyl group of 5-phosphorylribose-1-pyrophosphate (PRPP) to anthranilate to yield N-(5'-phosphoribosyl)-anthranilate (PRA). This chain is Anthranilate phosphoribosyltransferase, found in Thermococcus kodakarensis (strain ATCC BAA-918 / JCM 12380 / KOD1) (Pyrococcus kodakaraensis (strain KOD1)).